A 640-amino-acid chain; its full sequence is 1-deoxy-D-xylulose-5-phosphate synthase (640 aa).

Thiamine diphosphate contacts are provided by residues H75 and 117–119 (GHA). D146 serves as a coordination point for Mg(2+). Thiamine diphosphate is bound by residues 147 to 148 (AA), N175, and E370. A Mg(2+)-binding site is contributed by N175.

The protein belongs to the transketolase family. DXPS subfamily. Homodimer. Mg(2+) serves as cofactor. Requires thiamine diphosphate as cofactor.

It carries out the reaction D-glyceraldehyde 3-phosphate + pyruvate + H(+) = 1-deoxy-D-xylulose 5-phosphate + CO2. The protein operates within metabolic intermediate biosynthesis; 1-deoxy-D-xylulose 5-phosphate biosynthesis; 1-deoxy-D-xylulose 5-phosphate from D-glyceraldehyde 3-phosphate and pyruvate: step 1/1. In terms of biological role, catalyzes the acyloin condensation reaction between C atoms 2 and 3 of pyruvate and glyceraldehyde 3-phosphate to yield 1-deoxy-D-xylulose-5-phosphate (DXP). The sequence is that of 1-deoxy-D-xylulose-5-phosphate synthase from Chlamydia trachomatis serovar D (strain ATCC VR-885 / DSM 19411 / UW-3/Cx).